Here is a 264-residue protein sequence, read N- to C-terminus: Thymidylate synthase (264 aa).

Arg21 contributes to the dUMP binding site. Residue His51 coordinates (6R)-5,10-methylene-5,6,7,8-tetrahydrofolate. Position 126 to 127 (126 to 127) interacts with dUMP; sequence RR. Cys146 acts as the Nucleophile in catalysis. DUMP is bound by residues 166-169, Asn177, and 207-209; these read RSCD and HLY. (6R)-5,10-methylene-5,6,7,8-tetrahydrofolate is bound at residue Asp169. Ala263 contacts (6R)-5,10-methylene-5,6,7,8-tetrahydrofolate.

The protein belongs to the thymidylate synthase family. Bacterial-type ThyA subfamily. Homodimer.

It is found in the cytoplasm. The enzyme catalyses dUMP + (6R)-5,10-methylene-5,6,7,8-tetrahydrofolate = 7,8-dihydrofolate + dTMP. The protein operates within pyrimidine metabolism; dTTP biosynthesis. Its function is as follows. Catalyzes the reductive methylation of 2'-deoxyuridine-5'-monophosphate (dUMP) to 2'-deoxythymidine-5'-monophosphate (dTMP) while utilizing 5,10-methylenetetrahydrofolate (mTHF) as the methyl donor and reductant in the reaction, yielding dihydrofolate (DHF) as a by-product. This enzymatic reaction provides an intracellular de novo source of dTMP, an essential precursor for DNA biosynthesis. In Edwardsiella ictaluri (strain 93-146), this protein is Thymidylate synthase.